The chain runs to 33 residues: Photosystem II reaction center protein Psb30 (33 aa).

A helical membrane pass occupies residues 8-28 (QLTALAFIVLSGPLVIALLAF).

Belongs to the Psb30/Ycf12 family. PSII is composed of 1 copy each of membrane proteins PsbA, PsbB, PsbC, PsbD, PsbE, PsbF, PsbH, PsbI, PsbJ, PsbK, PsbL, PsbM, PsbT, PsbX, PsbY, PsbZ, Psb30/Ycf12, peripheral proteins of the oxygen-evolving complex and a large number of cofactors. It forms dimeric complexes.

It is found in the plastid. The protein resides in the chloroplast thylakoid membrane. Its function is as follows. A core subunit of photosystem II (PSII), probably helps stabilize the reaction center. This Staurastrum punctulatum (Green alga) protein is Photosystem II reaction center protein Psb30.